A 450-amino-acid chain; its full sequence is Tubulin alpha chain (450 aa).

Position 11 (Gln-11) interacts with GTP. Lys-40 is modified (N6-acetyllysine). The GTP site is built by Glu-71, Ser-140, Gly-144, Thr-145, Thr-179, Asn-206, and Asn-228. Residue Glu-71 coordinates Mg(2+). Glu-254 is a catalytic residue.

Belongs to the tubulin family. Dimer of alpha and beta chains. A typical microtubule is a hollow water-filled tube with an outer diameter of 25 nm and an inner diameter of 15 nM. Alpha-beta heterodimers associate head-to-tail to form protofilaments running lengthwise along the microtubule wall with the beta-tubulin subunit facing the microtubule plus end conferring a structural polarity. Microtubules usually have 13 protofilaments but different protofilament numbers can be found in some organisms and specialized cells. Mg(2+) is required as a cofactor. Acetylation of alpha chains at Lys-40 stabilizes microtubules and affects affinity and processivity of microtubule motors. This modification has a role in multiple cellular functions, ranging from cell motility, cell cycle progression or cell differentiation to intracellular trafficking and signaling.

The protein localises to the cytoplasm. Its subcellular location is the cytoskeleton. It carries out the reaction GTP + H2O = GDP + phosphate + H(+). Its function is as follows. Tubulin is the major constituent of microtubules, a cylinder consisting of laterally associated linear protofilaments composed of alpha- and beta-tubulin heterodimers. Microtubules grow by the addition of GTP-tubulin dimers to the microtubule end, where a stabilizing cap forms. Below the cap, tubulin dimers are in GDP-bound state, owing to GTPase activity of alpha-tubulin. This is Tubulin alpha chain from Oxytricha granulifera (Ciliate).